Here is a 535-residue protein sequence, read N- to C-terminus: Probable inorganic phosphate transporter 1-7 (535 aa).

The Cytoplasmic portion of the chain corresponds to 1-24; sequence MAGDQLNVLNALDVAKTQWYHFTA. A helical membrane pass occupies residues 25–45; sequence IIIAGMGFFTDAYDLFCISLV. The Extracellular portion of the chain corresponds to 46 to 70; that stretch reads TKLLGRIYYHVDGSEKPGTLPPNVS. A helical transmembrane segment spans residues 71–91; the sequence is AAVNGVAFCGTLAGQLFFGWL. The Cytoplasmic portion of the chain corresponds to 92–99; sequence GDKLGRKK. The chain crosses the membrane as a helical span at residues 100–120; that stretch reads VYGMTLMVMVLCSIASGLSFG. Residues 121 to 131 are Extracellular-facing; it reads SNPKTVMTTLC. A helical transmembrane segment spans residues 132-152; the sequence is FFRFWLGFGIGGDYPLSATIM. At 153 to 161 the chain is on the cytoplasmic side; the sequence is SEYANKKTR. A helical membrane pass occupies residues 162-182; the sequence is GAFIAAVFAMQGFGILTGGIF. Residues 183-211 lie on the Extracellular side of the membrane; that stretch reads AIIVSAAFEAKFPAPTYQIDALASTVPQA. The chain crosses the membrane as a helical span at residues 212-232; the sequence is DYVWRIILMVGALPAAMTYYS. The Cytoplasmic portion of the chain corresponds to 233-289; it reads RSKMPETARYTALVAKDAKLAASNMSKVLQVEIEAEQQGTEDKSNSFGLFSKEFMKR. Residues 290–310 traverse the membrane as a helical segment; that stretch reads HGLHLLGTTSTWFLLDIAFYS. Residues 311-345 are Extracellular-facing; it reads QNLFQKDIFSAIGWIPPAQTMNAIQEVFKIARAQT. Residues 346-366 form a helical membrane-spanning segment; it reads LIALCSTVPGYWFTVAFIDVI. Residues 367–368 lie on the Cytoplasmic side of the membrane; that stretch reads GR. The helical transmembrane segment at 369 to 389 threads the bilayer; sequence FAIQMMGFFFMTVFMFALAIP. The Extracellular portion of the chain corresponds to 390-399; it reads YDHWTHKENR. A helical membrane pass occupies residues 400 to 420; it reads IGFVAMYSLTFFFANFGPNAT. Over 421-438 the chain is Cytoplasmic; the sequence is TFVVPAEIFPARFRSTCH. A helical membrane pass occupies residues 439–459; sequence GISAASGKLGAMVGAFGFLYL. The Extracellular segment spans residues 460–480; sequence AQSPDKTKTEHGYPPGIGVKN. A helical membrane pass occupies residues 481-501; the sequence is SLIVLGVVNLLGMVFTLLVPE. Over 502 to 535 the chain is Cytoplasmic; it reads SKGKSLEEMSGENEQNDESSSSSNNNSNNAVSTA. Residues 506–535 are disordered; sequence SLEEMSGENEQNDESSSSSNNNSNNAVSTA. The span at 519 to 535 shows a compositional bias: low complexity; it reads ESSSSSNNNSNNAVSTA. Ser520 is modified (phosphoserine).

The protein belongs to the major facilitator superfamily. Phosphate:H(+) symporter (TC 2.A.1.9) family. In terms of tissue distribution, mature pollen.

The protein localises to the membrane. Its function is as follows. High-affinity transporter for external inorganic phosphate. The polypeptide is Probable inorganic phosphate transporter 1-7 (PHT1-7) (Arabidopsis thaliana (Mouse-ear cress)).